The chain runs to 348 residues: Phosphoribosylformylglycinamidine cyclo-ligase (348 aa).

It belongs to the AIR synthase family.

Its subcellular location is the cytoplasm. The catalysed reaction is 2-formamido-N(1)-(5-O-phospho-beta-D-ribosyl)acetamidine + ATP = 5-amino-1-(5-phospho-beta-D-ribosyl)imidazole + ADP + phosphate + H(+). The protein operates within purine metabolism; IMP biosynthesis via de novo pathway; 5-amino-1-(5-phospho-D-ribosyl)imidazole from N(2)-formyl-N(1)-(5-phospho-D-ribosyl)glycinamide: step 2/2. This is Phosphoribosylformylglycinamidine cyclo-ligase from Sorangium cellulosum (strain So ce56) (Polyangium cellulosum (strain So ce56)).